We begin with the raw amino-acid sequence, 1664 residues long: MESTDSSDSSGDSLKSIPRPDFEALSAIGSPQPQLQSSSLDGHVEMEPVIMPSKRQKYIVSAPPGSANCSSNSSSSSPSNINVGSSLTMKLTKVQPQQHQAKSSTPNNKGKVAKEMVALQRSHIESEVLSNFVTGVSKLKSRKSRYVPGNLATQAVGGELSRSLNTSSENENKSLKVALKRSSSIPAPILDSDDDWQDEDIAWGVTTCRPRGRSMAFEDGERLANLNAEDRNIVPAYSMATRCRSRSKTLSLSNSWSNDDKGPRRSNLRSENEEFAKKHNAFLDRIIHDDRESELALNTSGEGESSLFSDASDTKTTTAKTPEEEAAERLALIYEEPPTPGWDPFCWKCRGCGKLMPCSKCLRSFHSYCVRPATTKFDSSWKCPECQVIEAAPKRLRRNGVSVDLLSQLLSFALDRMKHVRGAHKLRSPLEVFPLTYKKFFVNPVSFESLAQCIRNGAYQSTDEFLSEVKWIQHNALILDAGDAKVEQASKAVVKVCRQEANEIDTCPECYLNANSSDEWFVKVCRHPHLLLWAKLKGFPYWPAKAMGSSNSTLVNVRFFGKHDRAFVPVKDCFLYSAQNPNTQTSRRSARDLAECIREVEIHIDHIKRKIGAFNYAPYRTPYDPLEEQQQLEQMMPGVYAAIDRELEPANKTPLQFLIRKTADDKLSIVKKTKATESGNESDQSPSPTKKLSEVDVVSVTGSGCSDHSNVKSNNYEVISRSGESLTDSRCKVLLKRKSLAAKIVAESVETSEAVAPKRKHSLSDASFTSESSEHKRKSKHARKQHDNQDNQIEEAEKTGQEPPKSPTISKQNENLRDEENVIENAANDTSSASPVSASVVSVVELVRRRQGVTITKIPREQQQTAEDTAAVPIPLPTAPPPKQNIPKGNEAANPKQSDVERQQEQLIKKVIPFIEIKTEVMSEPDDEGIEEASPANQPQTDQVPLQQETITAQPESQMPAAAPAPQPKPVDNAPFEEVRIKEEILSEDEMETEQSIVSRRLKSVPPMPLPMPPPPPLPPREESPATADSVRFVGDTTIQRVSQKQGGKSTDTGGKRKGVQQVPIAGIPQAPSPTHSPLLSTAPSPSASPKPTSTLAVSKPPPPPPPKGKSASHLQFRGKNDRIPTSPPATAPPATNTSSLLRSNMVVIPVEQGGSCNAHSPMTIPVPPLRAVSKNTLQNTSTGSTSSCVPSSVSMPPPLAGLSIPPVATPTSQEESITNSGQPVGLLASALNGTANDVLSSDSIPNDPITPGLATALSEMLLHTGVPKLIARPRGALRSDGSQIYPSQAGPVSQKLKENAHKITDYFISVIEDTLSDMATGDQSVLQARIAGLSLENERLKQHYDRQINDLHRTSELMISEMRKTLEQEHKRVISELRQQNAIELMRAVEEAKRKQWCANCMREAQLYCCWNTSYCDYPCQQLHWPGHSATCGQSVPPTIPVPPSVPTPIIEPGRAKAKVATPTATPSITNPSPSSQIMRTVAACPSAPPSANASSSKKWPPMMTLMNQSNQEAMLKLPATTYLRPVVSTTMTAPVTAPQPANNNSTNVIMAPTPPPGNNLATIISAQRNPPNYNAKHPNPAMPVQRFNIPLPITVNSNAPFMMAEQHQKQVPKATGRSGKNNSRMRQTYSNNINNSNPQGMRCNNNPQAIRQNQMNQQVFQP.

3 stretches are compositionally biased toward low complexity: residues 1-16 (MEST…SLKS), 30-40 (SPQPQLQSSSL), and 61-84 (SAPP…INVG). Disordered stretches follow at residues 1 to 84 (MEST…INVG), 251 to 271 (SLSN…LRSE), and 295 to 323 (LALN…KTPE). The span at 258–271 (NDDKGPRRSNLRSE) shows a compositional bias: basic and acidic residues. The span at 296-308 (ALNTSGEGESSLF) shows a compositional bias: polar residues. A compositionally biased stretch (low complexity) spans 309 to 320 (SDASDTKTTTAK). The PHD-type zinc finger occupies 343–389 (DPFCWKCRGCGKLMPCSKCLRSFHSYCVRPATTKFDSSWKCPECQVI). Residues cysteine 346, cysteine 349, cysteine 358, cysteine 361, histidine 366, cysteine 369, cysteine 383, and cysteine 386 each coordinate Zn(2+). Residues 401–504 (VSVDLLSQLL…KVCRQEANEI (104 aa)) enclose the Bromo domain. Zn(2+) contacts are provided by cysteine 507, cysteine 510, and cysteine 525. One can recognise a PWWP domain in the interval 528 to 579 (PHLLLWAKLKGFPYWPAKAMGSSNSTLVNVRFFGKHDRAFVPVKDCFLYSAQ). Disordered stretches follow at residues 672-693 (KTKA…KKLS), 747-815 (ESVE…QNEN), 857-905 (KIPR…RQQE), and 919-1139 (TEVM…TNTS). A compositionally biased stretch (polar residues) spans 676–690 (TESGNESDQSPSPTK). Residues 775-784 (HKRKSKHARK) show a composition bias toward basic residues. A compositionally biased stretch (basic and acidic residues) spans 785-800 (QHDNQDNQIEEAEKTG). A compositionally biased stretch (pro residues) spans 874–884 (IPLPTAPPPKQ). The span at 935–952 (PANQPQTDQVPLQQETIT) shows a compositional bias: polar residues. Residues 953-962 (AQPESQMPAA) are compositionally biased toward low complexity. The segment covering 1006–1019 (PPMPLPMPPPPPLP) has biased composition (pro residues). Polar residues predominate over residues 1037–1053 (TTIQRVSQKQGGKSTDT). The span at 1073–1097 (SPTHSPLLSTAPSPSASPKPTSTLA) shows a compositional bias: low complexity. The Zn(2+) site is built by cysteine 1399, cysteine 1402, cysteine 1410, cysteine 1411, cysteine 1417, cysteine 1421, histidine 1429, and cysteine 1433. Residues 1399-1433 (CANCMREAQLYCCWNTSYCDYPCQQLHWPGHSATC) form an MYND-type zinc finger. The segment at 1613 to 1648 (VPKATGRSGKNNSRMRQTYSNNINNSNPQGMRCNNN) is disordered. Residues 1620–1648 (SGKNNSRMRQTYSNNINNSNPQGMRCNNN) are compositionally biased toward polar residues.

The protein resides in the nucleus. The protein localises to the chromosome. In terms of biological role, chromatin reader that recognizes specific histone signatures to regulate transcription. Plays a role in neuronal development. This is MYND-type zinc finger-containing chromatin reader Zmynd8 from Drosophila melanogaster (Fruit fly).